A 187-amino-acid polypeptide reads, in one-letter code: Elongation factor P (187 aa).

The protein belongs to the elongation factor P family.

The protein localises to the cytoplasm. It participates in protein biosynthesis; polypeptide chain elongation. Involved in peptide bond synthesis. Stimulates efficient translation and peptide-bond synthesis on native or reconstituted 70S ribosomes in vitro. Probably functions indirectly by altering the affinity of the ribosome for aminoacyl-tRNA, thus increasing their reactivity as acceptors for peptidyl transferase. The protein is Elongation factor P of Roseiflexus sp. (strain RS-1).